A 188-amino-acid polypeptide reads, in one-letter code: Peptidyl-tRNA hydrolase (188 aa).

Tyrosine 16 contacts tRNA. Catalysis depends on histidine 21, which acts as the Proton acceptor. Residues phenylalanine 66, asparagine 68, and asparagine 114 each contribute to the tRNA site.

Belongs to the PTH family. In terms of assembly, monomer.

It localises to the cytoplasm. It catalyses the reaction an N-acyl-L-alpha-aminoacyl-tRNA + H2O = an N-acyl-L-amino acid + a tRNA + H(+). Hydrolyzes ribosome-free peptidyl-tRNAs (with 1 or more amino acids incorporated), which drop off the ribosome during protein synthesis, or as a result of ribosome stalling. Its function is as follows. Catalyzes the release of premature peptidyl moieties from peptidyl-tRNA molecules trapped in stalled 50S ribosomal subunits, and thus maintains levels of free tRNAs and 50S ribosomes. The polypeptide is Peptidyl-tRNA hydrolase (Citrifermentans bemidjiense (strain ATCC BAA-1014 / DSM 16622 / JCM 12645 / Bem) (Geobacter bemidjiensis)).